Here is a 214-residue protein sequence, read N- to C-terminus: Alkaline phosphatase-like protein (214 aa).

A run of 4 helical transmembrane segments spans residues 3-23 (EIIIQVMNQFGYFGVAFLIMI), 48-68 (LGIIGMIIAATIGSVLGALIL), 141-161 (FLILTTLGTLIWNIVLVSLGA), and 177-197 (YSSVVVAILGVIFILGLLLFV).

This sequence belongs to the DedA family.

It localises to the cell membrane. The sequence is that of Alkaline phosphatase-like protein (apl) from Lactococcus lactis subsp. cremoris (strain MG1363).